Reading from the N-terminus, the 473-residue chain is Cytochrome c-552 (473 aa).

Positions 1–33 are cleaved as a signal peptide; that stretch reads MQHGDEMMKKMTGKSFALSALVAASFMAAGAMA. Residue His-93 coordinates heme c. Positions 121, 124, and 125 each coordinate heme. 6 residues coordinate heme c: Cys-159, Cys-162, His-163, Cys-201, Cys-204, and His-205. Ca(2+) is bound by residues Glu-207, Tyr-208, Lys-256, and Gln-258. Tyr-208 serves as a coordination point for substrate. His-259 is a substrate binding site. 9 residues coordinate heme c: His-270, Cys-277, Cys-280, His-281, His-296, Cys-309, Cys-312, His-313, and His-388.

It belongs to the cytochrome c-552 family. It depends on Ca(2+) as a cofactor. Heme c is required as a cofactor.

Its subcellular location is the periplasm. The catalysed reaction is 6 Fe(III)-[cytochrome c] + NH4(+) + 2 H2O = 6 Fe(II)-[cytochrome c] + nitrite + 8 H(+). The protein operates within nitrogen metabolism; nitrate reduction (assimilation). Functionally, catalyzes the reduction of nitrite to ammonia, consuming six electrons in the process. The polypeptide is Cytochrome c-552 (Shewanella sp. (strain ANA-3)).